We begin with the raw amino-acid sequence, 179 residues long: uncharacterized protein (179 aa).

This sequence belongs to the CAPAB/TerDEXZ family.

This is an uncharacterized protein from Synechocystis sp. (strain ATCC 27184 / PCC 6803 / Kazusa).